Consider the following 155-residue polypeptide: UPF0303 protein lp_3613 (155 aa).

This sequence belongs to the UPF0303 family.

The chain is UPF0303 protein lp_3613 from Lactiplantibacillus plantarum (strain ATCC BAA-793 / NCIMB 8826 / WCFS1) (Lactobacillus plantarum).